Here is a 127-residue protein sequence, read N- to C-terminus: Fluoride-specific ion channel FluC (127 aa).

The next 4 helical transmembrane spans lie at 4-24 (SLLV…LLGM), 37-57 (TVVA…FLAA), 68-88 (LIIT…AETV), and 96-116 (LLWA…MTAA). Positions 75 and 78 each coordinate Na(+).

The protein belongs to the fluoride channel Fluc/FEX (TC 1.A.43) family.

The protein localises to the cell inner membrane. It carries out the reaction fluoride(in) = fluoride(out). Its activity is regulated as follows. Na(+) is not transported, but it plays an essential structural role and its presence is essential for fluoride channel function. Fluoride-specific ion channel. Important for reducing fluoride concentration in the cell, thus reducing its toxicity. This is Fluoride-specific ion channel FluC from Pseudomonas syringae pv. maculicola.